Reading from the N-terminus, the 1097-residue chain is Error-prone DNA polymerase (1097 aa).

Positions 1039–1097 are disordered; sequence PTGRGDEFAHGSPGGGDSRDRSPPKPRDIVVPLCRARHKGIDPEPETMPSAFPKPRDFR. Basic and acidic residues predominate over residues 1055 to 1066; the sequence is DSRDRSPPKPRD.

The protein belongs to the DNA polymerase type-C family. DnaE2 subfamily.

It is found in the cytoplasm. It carries out the reaction DNA(n) + a 2'-deoxyribonucleoside 5'-triphosphate = DNA(n+1) + diphosphate. Its function is as follows. DNA polymerase involved in damage-induced mutagenesis and translesion synthesis (TLS). It is not the major replicative DNA polymerase. In Allorhizobium ampelinum (strain ATCC BAA-846 / DSM 112012 / S4) (Agrobacterium vitis (strain S4)), this protein is Error-prone DNA polymerase.